A 158-amino-acid chain; its full sequence is NAD(P)H-quinone oxidoreductase subunit J, chloroplastic (158 aa).

It belongs to the complex I 30 kDa subunit family. NDH is composed of at least 16 different subunits, 5 of which are encoded in the nucleus.

It localises to the plastid. It is found in the chloroplast thylakoid membrane. It carries out the reaction a plastoquinone + NADH + (n+1) H(+)(in) = a plastoquinol + NAD(+) + n H(+)(out). The catalysed reaction is a plastoquinone + NADPH + (n+1) H(+)(in) = a plastoquinol + NADP(+) + n H(+)(out). Functionally, NDH shuttles electrons from NAD(P)H:plastoquinone, via FMN and iron-sulfur (Fe-S) centers, to quinones in the photosynthetic chain and possibly in a chloroplast respiratory chain. The immediate electron acceptor for the enzyme in this species is believed to be plastoquinone. Couples the redox reaction to proton translocation, and thus conserves the redox energy in a proton gradient. This is NAD(P)H-quinone oxidoreductase subunit J, chloroplastic from Guizotia abyssinica (Niger).